A 302-amino-acid chain; its full sequence is MAANSAGEYIKHHLGNLTYGKLPEGYVRECHGHAETLSQATWTMACNGTEAKDMGFAAFHVDSLAWSGGLGIIMCLLFWLGARKATAGVPSGFLNFVEIIIEFIDTQVRDSFHGKSKLIAPLSLVIFCWVFLMNLMDLIPVDFIPKTFEWVMVTFFGWSAHEAYFKIVPSTDPNITLGMSFSVMFLIIFLTIKTKGVGGFVGTLALHPFESGNPVVKALLIPINLLLETIALLAKPVSLGLRLFGNMYAGEFVFILLAAMMGTWQFIGAWPWAVFHILVITLQAFIFMVLTIVYLSMAVEEH.

7 helical membrane passes run Val-61–Gly-81, Ile-119–Ile-139, Phe-148–Val-168, Asp-172–Ile-192, Pro-214–Ala-234, Phe-252–Trp-272, and Ala-273–Val-293.

Belongs to the ATPase A chain family. In terms of assembly, F-type ATPases have 2 components, CF(1) - the catalytic core - and CF(0) - the membrane proton channel. CF(1) has five subunits: alpha(3), beta(3), gamma(1), delta(1), epsilon(1). CF(0) has three main subunits: a(1), b(2) and c(9-12). The alpha and beta chains form an alternating ring which encloses part of the gamma chain. CF(1) is attached to CF(0) by a central stalk formed by the gamma and epsilon chains, while a peripheral stalk is formed by the delta and b chains.

It is found in the cell inner membrane. Functionally, key component of the proton channel; it plays a direct role in the translocation of protons across the membrane. The protein is ATP synthase subunit a of Alcanivorax borkumensis (strain ATCC 700651 / DSM 11573 / NCIMB 13689 / SK2).